A 262-amino-acid chain; its full sequence is Ankyrin repeat domain-containing protein 7 (262 aa).

5 ANK repeats span residues 67-96 (KYRTPLHLACANGHRDVVLFLIEQQCKINI), 100-129 (ENKSPLIKAVQCQNEDCATILLNCGADPNL), 133-162 (RYNTALHYAVCGQSFSLVEQLLDYEADLEA), 166-195 (DGYTPLLVAVINNNPKMVKFLLEKGADVNA), and 199-228 (YQRTALILAVSGEPTRLVKLLLQQGVELSC).

In Macaca fascicularis (Crab-eating macaque), this protein is Ankyrin repeat domain-containing protein 7 (ANKRD7).